Reading from the N-terminus, the 356-residue chain is Hyaluronan and proteoglycan link protein 1 (356 aa).

A propeptide spanning residues 1–9 (MRSLLLLVL) is cleaved from the precursor. An Ig-like V-type domain is found at 40–154 (PRLLVEAEQA…EGLEDDTAVV (115 aa)). N58 carries an N-linked (GlcNAc...) asparagine glycan. 5 disulfides stabilise this stretch: C63/C141, C183/C254, C207/C228, C281/C351, and C306/C327. 2 consecutive Link domains span residues 161 to 256 (VVFP…FCFT) and 261 to 353 (GRFY…YCFR).

It belongs to the HAPLN family. Ubiquitously expressed.

It is found in the secreted. Its subcellular location is the extracellular space. It localises to the extracellular matrix. Functionally, stabilizes the aggregates of proteoglycan monomers with hyaluronic acid in the extracellular cartilage matrix. The polypeptide is Hyaluronan and proteoglycan link protein 1 (Hapln1) (Mus musculus (Mouse)).